The sequence spans 526 residues: GMP synthase [glutamine-hydrolyzing] (526 aa).

The Glutamine amidotransferase type-1 domain maps to 9 to 208 (RILILDFGSQ…VKDICGCECL (200 aa)). The active-site Nucleophile is the cysteine 86. Catalysis depends on residues histidine 182 and glutamate 184. The region spanning 209–401 (WTPATIIDDA…LGLPYDMLYR (193 aa)) is the GMPS ATP-PPase domain. 236 to 242 (SGGVDSS) lines the ATP pocket.

Homodimer.

It catalyses the reaction XMP + L-glutamine + ATP + H2O = GMP + L-glutamate + AMP + diphosphate + 2 H(+). The protein operates within purine metabolism; GMP biosynthesis; GMP from XMP (L-Gln route): step 1/1. Its function is as follows. Catalyzes the synthesis of GMP from XMP. This is GMP synthase [glutamine-hydrolyzing] from Aeromonas salmonicida (strain A449).